The sequence spans 508 residues: Erythropoietin receptor (508 aa).

The N-terminal stretch at 1–24 is a signal peptide; the sequence is MNHLWTHLWPGVGSLCLLLAGAAW. The Extracellular segment spans residues 25–250; that stretch reads ASLPKPLDPK…SLLTASDLDP (226 aa). A disulfide bond links Cys52 and Cys62. The N-linked (GlcNAc...) asparagine glycan is linked to Asn76. Cys91 and Cys107 are oxidised to a cystine. The Fibronectin type-III domain maps to 148 to 247; it reads PPAGLLARRA…EPASLLTASD (100 aa). An N-linked (GlcNAc...) asparagine glycan is attached at Asn184. The WSXWS motif signature appears at 233–237; that stretch reads WSAWS. Residues 251-273 traverse the membrane as a helical segment; sequence LILTLSLILVLILLLLAVLALLS. The Cytoplasmic segment spans residues 274–508; it reads HRRTLKQKIW…PSPPGYVACS (235 aa). Residue Lys281 forms a Glycyl lysine isopeptide (Lys-Gly) (interchain with G-Cter in ubiquitin) linkage. A Box 1 motif motif is present at residues 282–290; the sequence is IWPGIPSPE. A phosphotyrosine; by JAK2 mark is found at Tyr368 and Tyr426. Positions 452-457 match the ITIM motif motif; the sequence is IKYLYL. Lys453 is covalently cross-linked (Glycyl lysine isopeptide (Lys-Gly) (interchain with G-Cter in ubiquitin)). Tyr454, Tyr456, Tyr468, Tyr489, and Tyr504 each carry phosphotyrosine; by JAK2. Residues 467 to 508 form a disordered region; sequence DYSSGGSQGAQGDSLNSPFLNPYENSLIPAPEPSPPGYVACS.

Belongs to the type I cytokine receptor family. Type 1 subfamily. Forms homodimers on EPO stimulation. The tyrosine-phosphorylated form interacts with several SH2 domain-containing proteins including LYN, the adapter protein SH2B2, PTPN6, PTPN11, JAK2, PI3 kinases, STAT5A/B, SOCS3, CRKL. Interacts with INPP5D/SHIP1. SH2B2 binding inhibits the JAK-STAT signaling. Interacts with RHEX; this interaction occurs in a erythropoietin (EPO)-dependent manner. Interacts with ATXN2L. In terms of processing, on EPO stimulation, phosphorylated on C-terminal tyrosine residues by JAK2. The phosphotyrosine motifs are also recruitment sites for several SH2-containing proteins and adapter proteins which mediate cell proliferation. Phosphorylation on Tyr-454 is required for PTPN6 interaction, Tyr-426 for PTPN11. Tyr-426 is also required for SOCS3 binding, but Tyr-454/Tyr-456 motif is the preferred binding site. Post-translationally, ubiquitinated by the ECS(SOCS2) complex following ligand-binding and phosphorylation by JAK2, leading to its degradation by the proteasome. Regulation by the ECS(SOCS2) complex acts as a negative feedback loop of erythropoietin-mediated signaling pathway. Ubiquitination at Lys-281 mediates receptor internalization, whereas ubiquitination at Lys-453 promotes trafficking of activated receptors to the lysosomes for degradation. Ubiquitinated by NOSIP; appears to be either multi-monoubiquitinated or polyubiquitinated. Ubiquitination mediates proliferation and survival of EPO-dependent cells.

It is found in the cell membrane. Functionally, receptor for erythropoietin, which mediates erythropoietin-induced erythroblast proliferation and differentiation. Upon EPO stimulation, EPOR dimerizes triggering the JAK2/STAT5 signaling cascade. In some cell types, can also activate STAT1 and STAT3. May also activate the LYN tyrosine kinase. Its function is as follows. Isoform EPOR-T acts as a dominant-negative receptor of EPOR-mediated signaling. The protein is Erythropoietin receptor (EPOR) of Canis lupus familiaris (Dog).